The primary structure comprises 443 residues: Chromosomal replication initiator protein DnaA (443 aa).

The segment at 1–73 is domain I, interacts with DnaA modulators; the sequence is MYGDHRQIWE…YDAASKATNK (73 aa). The domain II stretch occupies residues 73–106; the sequence is KLYEIKILSEDEEEYREIKESIEKENLTESTTLS. Residues 107–323 are domain III, AAA+ region; that stretch reads TLNPKYTFDT…GALIRIVAFS (217 aa). The ATP site is built by G151, G153, K154, and T155. The interval 324–443 is domain IV, binds dsDNA; that stretch reads NLTKANIDLE…EELKKRIKGY (120 aa).

Belongs to the DnaA family. As to quaternary structure, oligomerizes as a right-handed, spiral filament on DNA at oriC.

The protein localises to the cytoplasm. Functionally, plays an essential role in the initiation and regulation of chromosomal replication. ATP-DnaA binds to the origin of replication (oriC) to initiate formation of the DNA replication initiation complex once per cell cycle. Binds the DnaA box (a 9 base pair repeat at the origin) and separates the double-stranded (ds)DNA. Forms a right-handed helical filament on oriC DNA; dsDNA binds to the exterior of the filament while single-stranded (ss)DNA is stabiized in the filament's interior. The ATP-DnaA-oriC complex binds and stabilizes one strand of the AT-rich DNA unwinding element (DUE), permitting loading of DNA polymerase. After initiation quickly degrades to an ADP-DnaA complex that is not apt for DNA replication. Binds acidic phospholipids. This is Chromosomal replication initiator protein DnaA from Thermoanaerobacter pseudethanolicus (strain ATCC 33223 / 39E) (Clostridium thermohydrosulfuricum).